Consider the following 809-residue polypeptide: TLR4 interactor with leucine rich repeats (809 aa).

The N-terminal stretch at 1 to 25 (MEGVGAVRFWLVVCGCLAFPPRAES) is a signal peptide. The LRRNT domain occupies 26-57 (VCPERCDCQHPQHLLCTNRGLRAVPKTSSLPS). Residues 26–694 (VCPERCDCQH…AGGRGGVDYQ (669 aa)) lie on the Extracellular side of the membrane. LRR repeat units follow at residues 61–81 (VLTY…DFHR), 84–105 (QLRR…TFEK), 108–129 (RLEE…TLAP), 132–153 (KLRI…SFEG), 156–177 (SLVK…VFAP), 180–201 (NLLY…AFSQ), 204–223 (KLRF…RHAA), 230–251 (SLST…VFQH), 254–275 (RLGL…AFWG), 278–298 (ALRE…TLLE), 302–323 (SLEA…TFGH), and 326–347 (RLRE…IFAA). The N-linked (GlcNAc...) asparagine glycan is linked to asparagine 73. The LRRCT domain occupies 359 to 416 (NGWTCDCRLRGLKRWMGNWHSQGRLLTVFVQCRHPPALRGKYLDYLDDQLLQNGSCVD). Residue asparagine 411 is glycosylated (N-linked (GlcNAc...) asparagine). Disordered stretches follow at residues 412–462 (GSCV…RGRL) and 483–563 (RLSR…SAVQ). The segment covering 421–436 (PTAGSRQWPLPTSSEE) has biased composition (polar residues). A compositionally biased stretch (low complexity) spans 488–506 (GPGPHQGPSAAAPGSAPQS). A compositionally biased stretch (polar residues) spans 521 to 543 (ANLSQTEPTPTSEPASGTPSARD). A compositionally biased stretch (low complexity) spans 554-563 (ASEQQESAVQ). An N-linked (GlcNAc...) asparagine glycan is attached at asparagine 587. A helical membrane pass occupies residues 695–715 (LLTLVLLAVNALLVLLALAAW). Over 716-809 (GSRWLRRKLR…EDHLLQRFAD (94 aa)) the chain is Cytoplasmic. Serine 796 is subject to Phosphoserine.

Belongs to the lipopolysaccharide (LPS) receptor, a multi-protein complex containing at least CD14, MD-2 and TLR4. Interacts with TLR4; this interaction is greatly enhanced by LPS stimulation. Interacts with LPS. In terms of processing, N-glycolysaled. Highly expressed in brain, spinal cord and lung.

It localises to the membrane. Functionally, component of the TLR4 signaling complex. Mediates the innate immune response to bacterial lipopolysaccharide (LPS) leading to cytokine secretion. This chain is TLR4 interactor with leucine rich repeats (Tril), found in Mus musculus (Mouse).